The sequence spans 901 residues: Valine--tRNA ligase (901 aa).

The 'KMSKS' region signature appears at 536 to 540 (KLSKS). An ATP-binding site is contributed by Lys-539. The stretch at 831-901 (LEGLISFEKE…KLQGNLEVLS (71 aa)) forms a coiled coil.

Belongs to the class-I aminoacyl-tRNA synthetase family. ValS type 1 subfamily. In terms of assembly, monomer.

It is found in the cytoplasm. It catalyses the reaction tRNA(Val) + L-valine + ATP = L-valyl-tRNA(Val) + AMP + diphosphate. Catalyzes the attachment of valine to tRNA(Val). As ValRS can inadvertently accommodate and process structurally similar amino acids such as threonine, to avoid such errors, it has a 'posttransfer' editing activity that hydrolyzes mischarged Thr-tRNA(Val) in a tRNA-dependent manner. The protein is Valine--tRNA ligase of Chlorobaculum tepidum (strain ATCC 49652 / DSM 12025 / NBRC 103806 / TLS) (Chlorobium tepidum).